The following is a 323-amino-acid chain: Sphingolipid delta(4)-desaturase/C4-monooxygenase DES2 (323 aa).

Gly-2 carries the N-myristoyl glycine lipid modification. 2 consecutive transmembrane segments (helical) span residues 41–61 and 68–88; these read PNIK…CWLV and WLLF…TLAI. The short motif at 89–93 is the Histidine box-1 element; the sequence is HDISH. Residues 95–99 form a required for C4-hydroxylase activity region; it reads TAFGT. A Histidine box-2 motif is present at residues 128-132; it reads HVDHH. Residues 200–220 traverse the membrane as a helical segment; sequence IFALWGIKAIVYLLASSLLGL. The Histidine box-3 motif lies at 259 to 263; sequence HVEHH.

The protein belongs to the fatty acid desaturase type 1 family. DEGS subfamily.

The protein localises to the endoplasmic reticulum membrane. It catalyses the reaction a dihydroceramide + 2 Fe(II)-[cytochrome b5] + O2 + 2 H(+) = a phytoceramide + 2 Fe(III)-[cytochrome b5] + H2O. It carries out the reaction an N-acylsphinganine + 2 Fe(II)-[cytochrome b5] + O2 + 2 H(+) = an N-acylsphing-4-enine + 2 Fe(III)-[cytochrome b5] + 2 H2O. The catalysed reaction is N-octanoylsphinganine + 2 Fe(II)-[cytochrome b5] + O2 + 2 H(+) = N-octanoyl-4-hydroxysphinganine + 2 Fe(III)-[cytochrome b5] + H2O. The enzyme catalyses an N-acylsphinganine + 2 Fe(II)-[cytochrome b5] + O2 + 2 H(+) = an N-acyl-(4R)-4-hydroxysphinganine + 2 Fe(III)-[cytochrome b5] + H2O. The protein operates within membrane lipid metabolism; sphingolipid biosynthesis. In terms of biological role, bifunctional enzyme which acts both as a sphingolipid delta(4)-desaturase and a sphingolipid C4-monooxygenase. In Rattus norvegicus (Rat), this protein is Sphingolipid delta(4)-desaturase/C4-monooxygenase DES2.